We begin with the raw amino-acid sequence, 200 residues long: Cytochrome c biogenesis ATP-binding export protein CcmA (200 aa).

In terms of domain architecture, ABC transporter spans 2-200 (LDVIELDFDY…NKADYEEYHL (199 aa)). Residue 34–41 (GSNGAGKT) participates in ATP binding.

The protein belongs to the ABC transporter superfamily. CcmA exporter (TC 3.A.1.107) family. In terms of assembly, the complex is composed of two ATP-binding proteins (CcmA) and two transmembrane proteins (CcmB).

It localises to the cell inner membrane. It catalyses the reaction heme b(in) + ATP + H2O = heme b(out) + ADP + phosphate + H(+). Functionally, part of the ABC transporter complex CcmAB involved in the biogenesis of c-type cytochromes; once thought to export heme, this seems not to be the case, but its exact role is uncertain. Responsible for energy coupling to the transport system. This chain is Cytochrome c biogenesis ATP-binding export protein CcmA, found in Legionella pneumophila (strain Paris).